The chain runs to 471 residues: T-box transcription factor T (471 aa).

Positions 24–196 form a DNA-binding region, T-box; it reads LWTKFCSLTN…HNPFAKAFLD (173 aa).

In terms of tissue distribution, developing notochord.

It localises to the nucleus. Functionally, involved in the transcriptional regulation of genes required for mesoderm differentiation. The chain is T-box transcription factor T from Halocynthia roretzi (Sea squirt).